The following is a 401-amino-acid chain: Argininosuccinate synthase (401 aa).

ATP is bound at residue 8-16; sequence AYSGGLDTS. Tyr-87 lines the L-citrulline pocket. Position 117 (Gly-117) interacts with ATP. Thr-119, Asn-123, and Asp-124 together coordinate L-aspartate. Asn-123 lines the L-citrulline pocket. L-citrulline contacts are provided by Arg-127, Ser-175, Glu-259, and Tyr-271.

It belongs to the argininosuccinate synthase family. Type 1 subfamily. In terms of assembly, homotetramer.

It is found in the cytoplasm. It catalyses the reaction L-citrulline + L-aspartate + ATP = 2-(N(omega)-L-arginino)succinate + AMP + diphosphate + H(+). Its pathway is amino-acid biosynthesis; L-arginine biosynthesis; L-arginine from L-ornithine and carbamoyl phosphate: step 2/3. The polypeptide is Argininosuccinate synthase (Arthrobacter sp. (strain FB24)).